A 1037-amino-acid chain; its full sequence is MAALRISVWILVQALMMALVSSNSSHFLQLPQSQSVVENESVDFECQASTDPSSELHYEWLHNGHRIAYDKRVYQIGSHLHIEAVQRAEDVGDYVCIATSLASGAREASPPAKLSVIYIDSASVQLLGSNRNELLLKCHVEAVSGSDDPLQIEWYRNSAKLSSWQNVQLDQHRLIIRQPSAADDGLYRCTASNAAGRVMSKQGYVYRSSLKCLPRLPRRKNQKLPESWSKEVFLCRGKRGGSGGVEALPSAPEDLRIVQGPASHAIIKEGDPAALTCLYELPAELQNQRIQLRWRKDGKLLRHVELGNSLPLPGISSDSGKDALLREDARLVLHKQNGTLSFASIIASDAGQYQCQLQLEGYAPINSSPGTLEVIEQLKFVPQPTSKNLELDAPIAKVHCKAQGTPTPQVQWMRDDANTSLPDQVEVDANGTLIFRNVNADHRGNYTCLATNSQGQINATVAINVVVTPKFSVPPVGPIETAEQGNVVIHCQAIGDPKPTIQWDKDLTYLSENNTDRERFRFLENGTLEIRNVQAEDEGSYGCTIGNSAGLKREDVQLVVKTAGDGFPPEESGGDGFLVTRAVLITMTVALAYIVLVVGLMLWCRYRRQARKARLNELSTKEAGGDQPDGAANGKGSEQEPCLSKQRNGHGGQSRSKSNGDAQKSDDTACSQQSRASKKSAHIYEQLALPRSGLTELIQIGRGEFGDVFVGKLKASLVATGSPSDKDADTEKQHSNSENGSGGSGSGSTTLSTLNEKRRSKTSMDDIEEIKEEEQEQQQSDLDQLVLVKALNKVKDEQACQEFRRQLDLLRGISHKGVVRLFGLCREKDPHYMVLEYTDWGDLKQFLLATAGKVNTASAAATSSPPPLTTSQVLAVAYQIARGMDAIYRARFTHRDLATRNCVISSEFIVKVSYPALCKDKYSREYHKHRNTLLPIRWLAPECIQEDEYTTKSDIFAYGVVVWELFNQATKLPHEELTNEQVIQKSQAGTLEWTVAESTPDSLREILLSCWVSNPKERPSFSQLGAALSKAMQSLEK.

Residues 1-22 form the signal peptide; sequence MAALRISVWILVQALMMALVSS. Asparagine 23 and asparagine 39 each carry an N-linked (GlcNAc...) asparagine glycan. At 23–582 the chain is on the extracellular side; that stretch reads NSSHFLQLPQ…GGDGFLVTRA (560 aa). Ig-like C2-type domains follow at residues 25–115, 114–200, 252–366, 369–464, and 469–559; these read SHFL…AKLS, LSVI…RVMS, PEDL…APIN, PGTL…VAIN, and PKFS…VQLV. 4 disulfide bridges follow: cysteine 46/cysteine 96, cysteine 138/cysteine 189, cysteine 277/cysteine 355, and cysteine 400/cysteine 448. Residues asparagine 337, asparagine 418, asparagine 430, asparagine 445, asparagine 458, asparagine 513, and asparagine 525 are each glycosylated (N-linked (GlcNAc...) asparagine). Cysteine 491 and cysteine 543 form a disulfide bridge. The helical transmembrane segment at 583 to 603 threads the bilayer; it reads VLITMTVALAYIVLVVGLMLW. Residues 604-1037 lie on the Cytoplasmic side of the membrane; sequence CRYRRQARKA…LSKAMQSLEK (434 aa). 2 disordered regions span residues 618–681 and 719–764; these read LSTK…KKSA and ATGS…KTSM. Residues 653–675 are compositionally biased toward polar residues; it reads QSRSKSNGDAQKSDDTACSQQSR. Residue serine 680 is modified to Phosphoserine. The region spanning 694–1035 is the Protein kinase; inactive domain; sequence LTELIQIGRG…AALSKAMQSL (342 aa). The segment covering 724 to 735 has biased composition (basic and acidic residues); that stretch reads SDKDADTEKQHS.

This sequence belongs to the protein kinase superfamily. Tyr protein kinase family. Insulin receptor subfamily. In terms of assembly, interacts with plexA; component of a receptor complex that mediates the repulsive signaling in response to Semaphorin ligands.

The protein localises to the cell membrane. Functionally, acts as a calcium-dependent, homophilic cell adhesion molecule that regulates neural recognition during the development of the nervous system. Component of the repulsive Plexin signaling response to regulate motor axon guidance at the embryonic stage. Also component of a receptor complex that is required in the adult visual system to innervate the lamina layer; specific targeting of R1-R6 axons. In Drosophila ananassae (Fruit fly), this protein is Tyrosine-protein kinase-like otk.